The chain runs to 118 residues: DNA-directed RNA polymerase subunit omega (118 aa).

Residues 78–104 (DEPEEDSMAMLMGGGQPDKPAEDDMSE) form a disordered region.

Belongs to the RNA polymerase subunit omega family. The RNAP catalytic core consists of 2 alpha, 1 beta, 1 beta' and 1 omega subunit. When a sigma factor is associated with the core the holoenzyme is formed, which can initiate transcription.

The catalysed reaction is RNA(n) + a ribonucleoside 5'-triphosphate = RNA(n+1) + diphosphate. Functionally, promotes RNA polymerase assembly. Latches the N- and C-terminal regions of the beta' subunit thereby facilitating its interaction with the beta and alpha subunits. The protein is DNA-directed RNA polymerase subunit omega of Dinoroseobacter shibae (strain DSM 16493 / NCIMB 14021 / DFL 12).